The following is a 173-amino-acid chain: Nucleoside-triphosphatase THEP1 (173 aa).

ATP-binding positions include 15 to 22 (GMPGVGKT) and 101 to 108 (LKIIDEIG).

This sequence belongs to the THEP1 NTPase family.

It catalyses the reaction a ribonucleoside 5'-triphosphate + H2O = a ribonucleoside 5'-diphosphate + phosphate + H(+). Functionally, has nucleotide phosphatase activity towards ATP, GTP, CTP, TTP and UTP. May hydrolyze nucleoside diphosphates with lower efficiency. In Pyrobaculum aerophilum (strain ATCC 51768 / DSM 7523 / JCM 9630 / CIP 104966 / NBRC 100827 / IM2), this protein is Nucleoside-triphosphatase THEP1.